The chain runs to 349 residues: 1-acylglycerol-3-phosphate O-acyltransferase ABHD5 (349 aa).

Position 2 is an N-acetylalanine (alanine 2). The 108-residue stretch at 77 to 184 folds into the AB hydrolase-1 domain; it reads PLVLLHGFGG…LVEPWGFPER (108 aa). Residue serine 122 is modified to Phosphoserine. An HXXXXD motif motif is present at residues 327-332; the sequence is HYVYAD.

This sequence belongs to the peptidase S33 family. ABHD4/ABHD5 subfamily. In terms of assembly, interacts with ADRP, PLIN and PNPLA2. Interacts with PLIN5; promotes interaction with PNPLA2. Widely expressed in various tissues, including lymphocytes, liver, skeletal muscle and brain. Expressed by upper epidermal layers and dermal fibroblasts in skin, hepatocytes and neurons (at protein level).

The protein localises to the cytoplasm. It localises to the lipid droplet. It is found in the cytosol. It catalyses the reaction a 1-acyl-sn-glycero-3-phosphate + an acyl-CoA = a 1,2-diacyl-sn-glycero-3-phosphate + CoA. The enzyme catalyses 1-(9Z-octadecenoyl)-sn-glycero-3-phosphate + hexadecanoyl-CoA = 1-(9Z)-octadecenoyl-2-hexadecanoyl-sn-glycero-3-phosphate + CoA. The catalysed reaction is 1-(9Z-octadecenoyl)-sn-glycero-3-phosphate + octadecanoyl-CoA = 1-(9Z-octadecenoyl)-2-octadecanoyl-sn-glycero-3-phosphate + CoA. It carries out the reaction 1-(9Z-octadecenoyl)-sn-glycero-3-phosphate + (9Z)-octadecenoyl-CoA = 1,2-di-(9Z-octadecenoyl)-sn-glycero-3-phosphate + CoA. It catalyses the reaction 1-(9Z-octadecenoyl)-sn-glycero-3-phosphate + (5Z,8Z,11Z,14Z)-eicosatetraenoyl-CoA = 1-(9Z)-octadecenoyl-2-(5Z,8Z,11Z,14Z)-eicosatetraenoyl-sn-glycero-3-phosphate + CoA. The enzyme catalyses eicosanoyl-CoA + 1-(9Z-octadecenoyl)-sn-glycero-3-phosphate = 1-(9Z)-octadecenoyl-2-eicosanoyl-sn-glycero-3-phosphate + CoA. The catalysed reaction is 1-hexadecanoyl-sn-glycero-3-phosphate + (9Z)-octadecenoyl-CoA = 1-hexadecanoyl-2-(9Z-octadecenoyl)-sn-glycero-3-phosphate + CoA. It carries out the reaction 1-octadecanoyl-sn-glycero-3-phosphate + (9Z)-octadecenoyl-CoA = 1-octadecanoyl-2-(9Z-octadecenoyl)-sn-glycero-3-phosphate + CoA. It catalyses the reaction 1-(5Z,8Z,11Z,14Z-eicosatetraenoyl)-sn-glycero-3-phosphate + (9Z)-octadecenoyl-CoA = 1-(5Z,8Z,11Z,14Z)-eicosatetraenoyl-2-(9Z)-octadecenoyl-sn-glycero-3-phosphate + CoA. With respect to regulation, acyltransferase activity is inhibited by detergents such as Triton X-100 and 3-[(3-cholamidopropyl)dimethylammonio]-1-propanesulfonate (CHAPS). Acyltransferase activity is inhibited by the presence of magnesium and calcium. In terms of biological role, coenzyme A-dependent lysophosphatidic acid acyltransferase that catalyzes the transfer of an acyl group on a lysophosphatidic acid. Functions preferentially with 1-oleoyl-lysophosphatidic acid followed by 1-palmitoyl-lysophosphatidic acid, 1-stearoyl-lysophosphatidic acid and 1-arachidonoyl-lysophosphatidic acid as lipid acceptor. Functions preferentially with arachidonoyl-CoA followed by oleoyl-CoA as acyl group donors. Functions in phosphatidic acid biosynthesis. May regulate the cellular storage of triacylglycerol through activation of the phospholipase PNPLA2. Involved in keratinocyte differentiation. Regulates lipid droplet fusion. The sequence is that of 1-acylglycerol-3-phosphate O-acyltransferase ABHD5 from Homo sapiens (Human).